The sequence spans 220 residues: Deoxyribose-phosphate aldolase (220 aa).

Asp-89 (proton donor/acceptor) is an active-site residue. The Schiff-base intermediate with acetaldehyde role is filled by Lys-151. The active-site Proton donor/acceptor is Lys-180.

The protein belongs to the DeoC/FbaB aldolase family. DeoC type 1 subfamily.

The protein localises to the cytoplasm. The enzyme catalyses 2-deoxy-D-ribose 5-phosphate = D-glyceraldehyde 3-phosphate + acetaldehyde. Its pathway is carbohydrate degradation; 2-deoxy-D-ribose 1-phosphate degradation; D-glyceraldehyde 3-phosphate and acetaldehyde from 2-deoxy-alpha-D-ribose 1-phosphate: step 2/2. In terms of biological role, catalyzes a reversible aldol reaction between acetaldehyde and D-glyceraldehyde 3-phosphate to generate 2-deoxy-D-ribose 5-phosphate. This Mycoplasmopsis pulmonis (strain UAB CTIP) (Mycoplasma pulmonis) protein is Deoxyribose-phosphate aldolase.